Consider the following 22-residue polypeptide: XTCESPSHKFKGPCATNRNCES.

Belongs to the DEFL family. Group II subfamily.

Antimicrobial peptide. Active against Gram-positive and Gram-negative bacterial pathogens. The protein is Defensin D1 of Spinacia oleracea (Spinach).